Here is a 124-residue protein sequence, read N- to C-terminus: Fluoride-specific ion channel FluC 2 (124 aa).

The next 4 membrane-spanning stretches (helical) occupy residues 9 to 29, 34 to 54, 67 to 87, and 99 to 119; these read LGIFLAAMLGGLVRYLVSTWL, DFPWGTLFVNYLGIFCLIYLV, LILALGTGFCGGLTTFSSLML, and LSLILYLLLSIGGGLLLAYYL. Na(+) is bound by residues glycine 77 and threonine 80.

It belongs to the fluoride channel Fluc/FEX (TC 1.A.43) family.

The protein localises to the cell membrane. It catalyses the reaction fluoride(in) = fluoride(out). Its activity is regulated as follows. Na(+) is not transported, but it plays an essential structural role and its presence is essential for fluoride channel function. Functionally, fluoride-specific ion channel. Important for reducing fluoride concentration in the cell, thus reducing its toxicity. In Streptococcus pneumoniae serotype 4 (strain ATCC BAA-334 / TIGR4), this protein is Fluoride-specific ion channel FluC 2.